Consider the following 1205-residue polypeptide: A disintegrin and metalloproteinase with thrombospondin motifs 3 (1205 aa).

Residues 1-20 (MVLLSLWLIAAALVEVRTSA) form the signal peptide. Positions 21 to 249 (DGQAGNEEMV…QLNETMRRRR (229 aa)) are excised as a propeptide. N-linked (GlcNAc...) asparagine glycosylation is found at Asn-83, Asn-119, Asn-242, and Asn-345. The region spanning 256–460 (YNIEVLLGVD…HSYDCLLDDP (205 aa)) is the Peptidase M12B domain. Disulfide bonds link Cys-333–Cys-382, Cys-376–Cys-455, and Cys-415–Cys-441. Residue His-398 participates in Zn(2+) binding. Glu-399 is an active-site residue. 2 residues coordinate Zn(2+): His-402 and His-408. In terms of domain architecture, Disintegrin spans 470–550 (ELPGINYSMD…MWKNANQQKQ (81 aa)). Asn-475 carries N-linked (GlcNAc...) asparagine glycosylation. 7 disulfides stabilise this stretch: Cys-482–Cys-507, Cys-493–Cys-516, Cys-502–Cys-535, Cys-529–Cys-540, Cys-563–Cys-600, Cys-567–Cys-605, and Cys-578–Cys-590. The region spanning 551–606 (DGNWGSWTKFGSCSRTCGTGVRFRTRQCNNPMPINGGQDCPGVNFEYQLCNTEECQ) is the TSP type-1 1 domain. A spacer region spans residues 713-844 (RTVKGTFTRT…NSNNVIQEEL (132 aa)). Asn-814 carries N-linked (GlcNAc...) asparagine glycosylation. 3 consecutive TSP type-1 domains span residues 845 to 905 (DTFE…QECT), 906 to 965 (HPLW…NRVP), and 966 to 1014 (CPAQ…QLPP). Asn-942 is a glycosylation site (N-linked (GlcNAc...) asparagine). 3 cysteine pairs are disulfide-bonded: Cys-978–Cys-1010, Cys-982–Cys-1015, and Cys-993–Cys-999. One can recognise a PLAC domain in the interval 1015 to 1054 (CNDEPCLGDKSIFCQMEVLARYCSIPGYNKLCCESCSKRS). The segment at 1174-1205 (DSIGASSQARTSKKDGKIIDNRRPTRSSTLER) is disordered. A compositionally biased stretch (basic and acidic residues) spans 1185–1205 (SKKDGKIIDNRRPTRSSTLER).

The cofactor is Zn(2+). In terms of processing, the precursor is cleaved by a furin endopeptidase. Glycosylated. Can be O-fucosylated by POFUT2 on a serine or a threonine residue found within the consensus sequence C1-X(2)-(S/T)-C2-G of the TSP type-1 repeat domains where C1 and C2 are the first and second cysteine residue of the repeat, respectively. Fucosylated repeats can then be further glycosylated by the addition of a beta-1,3-glucose residue by the glucosyltransferase, B3GALTL. Fucosylation mediates the efficient secretion of ADAMTS family members. Can also be C-glycosylated with one or two mannose molecules on tryptophan residues within the consensus sequence W-X-X-W of the TPRs, and N-glycosylated. These other glycosylations can also facilitate secretion. In terms of tissue distribution, found in cartilage and skin.

The protein resides in the secreted. Its subcellular location is the extracellular space. The protein localises to the extracellular matrix. Functionally, cleaves the propeptides of type II collagen prior to fibril assembly. Does not act on types I and III collagens. The protein is A disintegrin and metalloproteinase with thrombospondin motifs 3 (ADAMTS3) of Homo sapiens (Human).